A 945-amino-acid chain; its full sequence is Sensor kinase CckA (945 aa).

Transmembrane regions (helical) follow at residues Ala111–Phe131 and Phe139–Ala159. 3 PAS domains span residues His171–Asp212, Leu313–Gly341, and Ala432–Gln505. Residues Gly574–Ile797 enclose the Histidine kinase domain. His577 carries the phosphohistidine; by autocatalysis modification. In terms of domain architecture, Response regulatory spans Thr825 to Leu941. A 4-aspartylphosphate modification is found at Asp876.

Its subcellular location is the cell inner membrane. It carries out the reaction ATP + protein L-histidine = ADP + protein N-phospho-L-histidine.. Its function is as follows. Component of a regulatory phosphorelay system that controls B.abortus cell growth, division, and intracellular survival inside mammalian host cells. This signaling pathway is composed of CckA, ChpT, CtrA and CpdR. CckA autophosphorylates in the presence of ATP on a conserved His residue and transfers a phosphoryl group to a conserved Asp residue on its C-terminal receiver domain. CckA-P transfers phosphoryl groups to the ChpT phosphotransferase. The sequence is that of Sensor kinase CckA from Brucella abortus (strain 2308).